A 432-amino-acid chain; its full sequence is Cytochrome c biogenesis protein CcsB (432 aa).

3 helical membrane passes run 14–34 (LRIA…GTAI), 72–92 (SSWF…CSWR), and 162–182 (VGPM…VWGS).

The protein belongs to the Ccs1/CcsB family. In terms of assembly, may interact with CcsA.

It is found in the cellular thylakoid membrane. Functionally, required during biogenesis of c-type cytochromes (cytochrome c6 and cytochrome f) at the step of heme attachment. In Prochlorococcus marinus (strain MIT 9303), this protein is Cytochrome c biogenesis protein CcsB.